The primary structure comprises 294 residues: ATP synthase gamma chain (294 aa).

It belongs to the ATPase gamma chain family. F-type ATPases have 2 components, CF(1) - the catalytic core - and CF(0) - the membrane proton channel. CF(1) has five subunits: alpha(3), beta(3), gamma(1), delta(1), epsilon(1). CF(0) has three main subunits: a, b and c.

Its subcellular location is the cell inner membrane. Produces ATP from ADP in the presence of a proton gradient across the membrane. The gamma chain is believed to be important in regulating ATPase activity and the flow of protons through the CF(0) complex. The chain is ATP synthase gamma chain from Campylobacter jejuni subsp. jejuni serotype O:6 (strain 81116 / NCTC 11828).